The chain runs to 87 residues: Kawaguchipeptin peptide (87 aa).

Positions 1 to 33 (MKNPTLLPKLTAPVERPAVTSSDLKQASSVDAA) are excised as a propeptide. Trp34 is lipidated: 3'-prenyl-2',N2-cyclotryptophan; partial. The cyclopeptide (Trp-Pro) cross-link spans 34–44 (WLNGDNNWSTP). Leu35 carries the post-translational modification D-leucine; partial. Trp41 carries the 3'-prenyl-2',N2-cyclotryptophan; partial lipid modification. The propeptide occupies 45–51 (FAGVNAA). A lipid anchor (3'-prenyl-2',N2-cyclotryptophan; partial) is attached at Trp52. The segment at residues 52-62 (WLNGDNNWSTP) is a cross-link (cyclopeptide (Trp-Pro)). Leu53 carries the post-translational modification D-leucine; partial. The 3'-prenyl-2',N2-cyclotryptophan; partial moiety is linked to residue Trp59. A propeptide spanning residues 63–69 (FAGVNAA) is cleaved from the precursor. Trp70 is lipidated: 3'-prenyl-2',N2-cyclotryptophan; partial. The segment at residues 70–80 (WLNGDNNWSTP) is a cross-link (cyclopeptide (Trp-Pro)). The residue at position 71 (Leu71) is a D-leucine; partial. Trp77 is lipidated: 3'-prenyl-2',N2-cyclotryptophan; partial. The propeptide occupies 81–87 (FAADGAE).

In terms of processing, kawaguchipeptin A contains a D-Leu and 2 prenylated Trp, whereas kawaguchipeptin B only contains unmodified amino acids. Post-translationally, kawaguchipeptin A is prenylated in vivo. Upon expression in E.coli of the whole operon, Trp residues are prenylated by C-prenyltransferase KgpF. Prenylation by KgpF is likely the last enzymatic step in the biosynthetic maturation of kawaguchipeptin A.

In terms of biological role, both kawaguchipeptin A and B, which only differ by post-translational modifications, have antibacterial activities, since they inhibit the growth of the Gram-positive bacterium S.aureus at a concentration of 1 ug/mL. This chain is Kawaguchipeptin peptide, found in Microcystis aeruginosa (strain NIES-88 / KW-MA1-3).